Consider the following 869-residue polypeptide: MGNREMEELIPLVNRLQDAFSALGQSCLLELPQIAVVGGQSAGKSSVLENFVGRDFLPRGSGIVTRRPLVLQLVTSKAEYAEFLHCKGKKFTDFDEVRHEIEAETDRVTGMNKGISSVPINLRVYSPHVLNLTLIDLPGITKVPVGDQPPDIEYQIRDMIMQFITRENCLILAVTPANTDLANSDALKLAKEVDPQGLRTIGVITKLDLMDEGTDARDVLENKLLPLRRGYVGVVNRSQKDIDGKKDIKAAMLAERKFFLSHPAYRHIADRMGTPHLQKVLNQQLTNHIRDTLPNFRNKLQGQLLSIEHEVEAFKNFKPEDPTRKTKALLQMVQQFAVDFEKRIEGSGDQVDTLELSGGAKINRIFHERFPFEIVKMEFNEKELRREISYAIKNIHGIRTGLFTPDMAFEAIVKKQIVKLKGPSLKSVDLVMQELINTVKKCTKRLANFPRLCEETERIVANHIREREGKTKDQVLLLIDIQVSYINTNHEDFIGFANAQQRSSQVHKKSTIGNQGTNLPPSRQIVIRKGWLTVSNIGIMKGGSKGYWFVLTAESLSWYKDDEEKEKKYMLPLDNLKVRDVEKGFMSSKHVFALFNTEQRNVYKDYRSLELACDSQEDVDSWKASLLRAGVYPDKSFTENDENGQAENFSMDPQLERQVETIRNLVDSYMSIINKCIRDLIPKTIMHLMINNVKDFINSELLAQLYSSEDQNTLMEESVEQAQRRDEMLRMYQALKEALAIIGDINTVTVSTPAPPPVDDSWLQHSRRSPPPSPTTQRRLTLSAPLPRPASSRGPAPAIPSPGPHSGAPPVPFRPGPLPPFPNSSDSYGAPPQVPSRPTRAPPSVPSRRPPPSPTRPTIIRPLESSLLD.

The Dynamin-type G domain occupies 28–294 (LLELPQIAVV…LTNHIRDTLP (267 aa)). The G1 motif stretch occupies residues 38–45 (GGQSAGKS). 38–46 (GGQSAGKSS) serves as a coordination point for GTP. The segment at 64-66 (VTR) is G2 motif. The interval 136–139 (DLPG) is G3 motif. The G4 motif stretch occupies residues 205 to 208 (TKLD). Residue 205 to 211 (TKLDLMD) coordinates GTP. Y231 is modified (phosphotyrosine). The segment at 235 to 238 (VNRS) is G5 motif. Residue 236-239 (NRSQ) participates in GTP binding. K299 carries the post-translational modification N6-acetyllysine. The PH domain occupies 525-631 (IVIRKGWLTV…WKASLLRAGV (107 aa)). Y603 bears the Phosphotyrosine mark. The residue at position 604 (K604) is an N6-acetyllysine. The region spanning 659-750 (VETIRNLVDS…IIGDINTVTV (92 aa)) is the GED domain. The disordered stretch occupies residues 752 to 869 (TPAPPPVDDS…IRPLESSLLD (118 aa)). Residues S769 and S773 each carry the phosphoserine modification. A compositionally biased stretch (low complexity) spans 775 to 796 (TTQRRLTLSAPLPRPASSRGPA). Pro residues-rich tracts occupy residues 797–822 (PAIP…PPFP) and 832–855 (PQVP…PSPT). S853 is modified (phosphoserine).

This sequence belongs to the TRAFAC class dynamin-like GTPase superfamily. Dynamin/Fzo/YdjA family. As to expression, isoform-specific expression in germ-cell-depleted testis (Sertoli cells), brain (peripheral sensory neurons), lung and heart.

The protein localises to the cytoplasm. It localises to the cytoskeleton. It is found in the cytoplasmic vesicle. Its subcellular location is the golgi apparatus. The catalysed reaction is GTP + H2O = GDP + phosphate + H(+). In terms of biological role, microtubule-associated force-producing protein involved in producing microtubule bundles and able to bind and hydrolyze GTP. Most probably involved in vesicular trafficking processes, in particular endocytosis. The sequence is that of Dynamin-3 (Dnm3) from Rattus norvegicus (Rat).